The primary structure comprises 45 residues: PAAGLSDPKIGNGCFGFPIDRIGSVSGLGCNRLVQNPPKPISGES.

Residues 1–5 (PAAGL) constitute a propeptide that is removed on maturation. Cys14 and Cys30 are disulfide-bonded.

This sequence belongs to the natriuretic peptide family. Expressed by the venom gland.

The protein resides in the secreted. Functionally, snake venom natriuretic peptide that targets both NPR1 and NPR2. Exhibits hypotensive and vasodepressor activities. This chain is Natriuretic peptide OsNP-d, found in Oxyuranus scutellatus scutellatus (Australian taipan).